A 156-amino-acid polypeptide reads, in one-letter code: 1-methylthio-D-xylulose 5-phosphate methylsulfurylase (156 aa).

Residues 55–122 enclose the Cupin type-2 domain; that stretch reads YFEVGPGGHS…ADEALGFLCM (68 aa). Mn(2+)-binding residues include Glu67, His69, His73, and His107. Cys121 is an active-site residue.

It catalyses the reaction S-methyl-1-thio-D-xylulose 5-phosphate + glutathione = S-(methylsulfanyl)glutathione + 1-deoxy-D-xylulose 5-phosphate. The enzyme catalyses S-(methylsulfanyl)glutathione + AH2 = methanethiol + glutathione + A. The protein operates within amino-acid biosynthesis; L-methionine biosynthesis via salvage pathway. It functions in the pathway metabolic intermediate biosynthesis; 1-deoxy-D-xylulose 5-phosphate biosynthesis. Functionally, catalyzes the formation of S-(methylsulfanyl)glutathione and 1-deoxy-D-xylulose 5-phosphate (DXP) from 1-methylthioxylulose 5-phosphate (MTXu-5P). The S-(methylsulfanyl)glutathione is reductively cleaved to relase methanethiol in a second reaction. Involved in the MTA-isoprenoid shunt of the methionine salvage pathway. The polypeptide is 1-methylthio-D-xylulose 5-phosphate methylsulfurylase (Rhodospirillum rubrum (strain ATCC 11170 / ATH 1.1.1 / DSM 467 / LMG 4362 / NCIMB 8255 / S1)).